The primary structure comprises 175 residues: Ribosome maturation factor RimM (175 aa).

Residues 100–174 (EDEYYWNDVI…VKHKIITVIW (75 aa)) form the PRC barrel domain.

It belongs to the RimM family. As to quaternary structure, binds ribosomal protein uS19.

The protein resides in the cytoplasm. An accessory protein needed during the final step in the assembly of 30S ribosomal subunit, possibly for assembly of the head region. Essential for efficient processing of 16S rRNA. May be needed both before and after RbfA during the maturation of 16S rRNA. It has affinity for free ribosomal 30S subunits but not for 70S ribosomes. The sequence is that of Ribosome maturation factor RimM from Buchnera aphidicola subsp. Schizaphis graminum (strain Sg).